The primary structure comprises 171 residues: Nicotinamide-nucleotide adenylyltransferase (171 aa).

The protein belongs to the archaeal NMN adenylyltransferase family.

It localises to the cytoplasm. The catalysed reaction is beta-nicotinamide D-ribonucleotide + ATP + H(+) = diphosphate + NAD(+). The protein operates within cofactor biosynthesis; NAD(+) biosynthesis; NAD(+) from nicotinamide D-ribonucleotide: step 1/1. The chain is Nicotinamide-nucleotide adenylyltransferase from Methanococcus maripaludis (strain DSM 14266 / JCM 13030 / NBRC 101832 / S2 / LL).